Consider the following 3065-residue polypeptide: MAX gene-associated protein (3065 aa).

Residues Lys-4 and Lys-178 each participate in a glycyl lysine isopeptide (Lys-Gly) (interchain with G-Cter in SUMO2) cross-link. The T-box DNA-binding region spans 84–260; the sequence is MWNEFYHRST…YNPFAKGFRD (177 aa). A compositionally biased stretch (basic and acidic residues) spans 259–277; it reads RDDGLNNKPQRDGKQKNSS. The tract at residues 259–322 is disordered; that stretch reads RDDGLNNKPQ…GHETSGKGLE (64 aa). A compositionally biased stretch (polar residues) spans 278–289; the sequence is DQEGNNISSSSG. Over residues 309 to 322 the composition is skewed to basic and acidic residues; that stretch reads PLSRGHETSGKGLE. Residues Lys-323, Lys-329, Lys-349, Lys-432, Lys-460, Lys-465, and Lys-482 each participate in a glycyl lysine isopeptide (Lys-Gly) (interchain with G-Cter in SUMO2) cross-link. The residue at position 534 (Ser-534) is a Phosphoserine. Lys-570 is covalently cross-linked (Glycyl lysine isopeptide (Lys-Gly) (interchain with G-Cter in SUMO2)). The segment at 604–653 is disordered; the sequence is QNASPNVPGKRGRPRKLKLCKAGRPPKNTGKSLISTKNTPVSPGSTFPDV. Ser-607 is modified (phosphoserine). Lys-613 is covalently cross-linked (Glycyl lysine isopeptide (Lys-Gly) (interchain with G-Cter in SUMO2)). A compositionally biased stretch (basic residues) spans 613-624; that stretch reads KRGRPRKLKLCK. The span at 632–648 shows a compositional bias: polar residues; that stretch reads TGKSLISTKNTPVSPGS. Ser-645 carries the post-translational modification Phosphoserine. Residues Lys-654, Lys-785, Lys-791, Lys-817, and Lys-826 each participate in a glycyl lysine isopeptide (Lys-Gly) (interchain with G-Cter in SUMO2) cross-link. At Ser-851 the chain carries Phosphoserine. Residues 881 to 911 are disordered; that stretch reads STSYSLKPHSVPPVSRKAKSQNRQATFSGRT. Residues 901–911 are compositionally biased toward polar residues; that stretch reads QNRQATFSGRT. Ser-924 is subject to Phosphoserine. Residue Lys-928 forms a Glycyl lysine isopeptide (Lys-Gly) (interchain with G-Cter in SUMO2) linkage. Residues 971-990 are disordered; that stretch reads RQAQQQQQQQQGSRPPGLSK. A compositionally biased stretch (low complexity) spans 972 to 981; sequence QAQQQQQQQQ. Glycyl lysine isopeptide (Lys-Gly) (interchain with G-Cter in SUMO2) cross-links involve residues Lys-990, Lys-1091, Lys-1140, Lys-1162, Lys-1199, and Lys-1207. The stretch at 1111–1147 forms a coiled coil; that stretch reads YDTLGEEAREEEEGIREEEEQLKEKKKRKKLEYTICE. Ser-1208 carries the post-translational modification Phosphoserine. Disordered regions lie at residues 1246–1332 and 1380–1429; these read RKKE…PGGP and RKSR…MEDI. Composition is skewed to low complexity over residues 1253–1269 and 1310–1322; these read QPSS…QQTS and KSSC…SSTS. Ser-1430 and Ser-1457 each carry phosphoserine. Residues Lys-1461 and Lys-1502 each participate in a glycyl lysine isopeptide (Lys-Gly) (interchain with G-Cter in SUMO2) cross-link. Disordered regions lie at residues 1488-1517, 1905-1927, and 1967-2029; these read SRKP…PGKN, SPPE…YSSG, and QMKR…EDRG. 2 stretches are compositionally biased toward polar residues: residues 1495 to 1514 and 1911 to 1927; these read LPST…TNRP and SFAS…YSSG. Residues 1968–1994 show a composition bias toward basic and acidic residues; that stretch reads MKRESQNPDQKDETNSIKREQETKKVL. Glycyl lysine isopeptide (Lys-Gly) (interchain with G-Cter in SUMO2) cross-links involve residues Lys-1985 and Lys-1992. Over residues 2008-2023 the composition is skewed to polar residues; that stretch reads IKQNSGAATSEETLND. Residues Lys-2103, Lys-2113, Lys-2135, Lys-2139, Lys-2146, Lys-2159, Lys-2194, Lys-2206, and Lys-2238 each participate in a glycyl lysine isopeptide (Lys-Gly) (interchain with G-Cter in SUMO2) cross-link. The disordered stretch occupies residues 2258–2316; it reads RRAAKSSRGNGHFQGHLLLPGEQIQPKQEKKGGRSSADFTVLDLEEDDEDDNEKTDDSI. The residue at position 2265 (Arg-2265) is an Omega-N-methylarginine. Residue Lys-2284 forms a Glycyl lysine isopeptide (Lys-Gly) (interchain with G-Cter in SUMO2) linkage. Residues 2300 to 2316 are compositionally biased toward acidic residues; sequence DLEEDDEDDNEKTDDSI. Glycyl lysine isopeptide (Lys-Gly) (interchain with G-Cter in SUMO2) cross-links involve residues Lys-2378, Lys-2413, Lys-2457, and Lys-2532. In terms of domain architecture, bHLH spans 2423 to 2474; sequence YYRRTHTANERRRRGEMRDLFEKLKITLGLLHSSKVSKSLILTRAFSEIQGL. At Ser-2541 the chain carries Phosphoserine. Residue Lys-2546 forms a Glycyl lysine isopeptide (Lys-Gly) (interchain with G-Cter in SUMO2) linkage. A disordered region spans residues 2576-2595; the sequence is KKDQATENTSPLNTPHTSAN. The segment covering 2581 to 2595 has biased composition (polar residues); it reads TENTSPLNTPHTSAN. Glycyl lysine isopeptide (Lys-Gly) (interchain with G-Cter in SUMO2) cross-links involve residues Lys-2629, Lys-2679, Lys-2698, and Lys-2784. Residues 2668 to 2709 form a disordered region; sequence GSKYPHEVPDSKPSDHLKDTVRNEDNSLEDKGRISSRGNRDG. Residues 2671 to 2709 show a composition bias toward basic and acidic residues; sequence YPHEVPDSKPSDHLKDTVRNEDNSLEDKGRISSRGNRDG. A coiled-coil region spans residues 2817–2841; it reads DDTDETLTSLLNEIAFLNQQLNDDS. A phosphoserine mark is found at Ser-2910 and Ser-2921. The disordered stretch occupies residues 2944–2968; the sequence is AIDGGKNTSGLPAEPESVSSPPTLH. Position 2978 is a phosphoserine (Ser-2978). Lys-3041 is covalently cross-linked (Glycyl lysine isopeptide (Lys-Gly) (interchain with G-Cter in SUMO2)).

In terms of assembly, interacts with MAX. Requires dimerization with MAX for E-box binding. Component of some MLL1/MLL complex, at least composed of the core components KMT2A/MLL1, ASH2L, HCFC1/HCF1, WDR5 and RBBP5, as well as the facultative components BACC1, CHD8, E2F6, HSP70, INO80C, KANSL1, LAS1L, MAX, MCRS1, MGA, MYST1/MOF, PELP1, PHF20, PRP31, RING2, RUVB1/TIP49A, RUVB2/TIP49B, SENP3, TAF1, TAF4, TAF6, TAF7, TAF9 and TEX10. Interacts with ZMYND11. Highly expressed in germ cells and granulosa cells.

It is found in the nucleus. In terms of biological role, functions as a dual-specificity transcription factor, regulating the expression of both MAX-network and T-box family target genes. Functions as a repressor or an activator. Binds to 5'-AATTTCACACCTAGGTGTGAAATT-3' core sequence and seems to regulate MYC-MAX target genes. Suppresses transcriptional activation by MYC and inhibits MYC-dependent cell transformation. Function activated by heterodimerization with MAX. This heterodimerization serves the dual function of both generating an E-box-binding heterodimer and simultaneously blocking interaction of a corepressor. This is MAX gene-associated protein from Homo sapiens (Human).